A 332-amino-acid polypeptide reads, in one-letter code: uncharacterized protein (332 aa).

Acidic residues-rich tracts occupy residues 290-314 (EDID…DSFG) and 323-332 (EDSEDSDNSE). The tract at residues 290-332 (EDIDDIDDSDESDDSDDSEDSDSFGDSDSSGNSEDSEDSDNSE) is disordered.

Belongs to the mimivirus L17x/L18x family.

This is an uncharacterized protein from Acanthamoeba polyphaga mimivirus (APMV).